The sequence spans 236 residues: ATP synthase subunit a (236 aa).

5 helical membrane passes run 17-37 (WTNL…LFGL), 76-96 (SFFV…GLII), 113-133 (PVVT…AGVA), 170-190 (IFGN…MAFS), and 196-216 (MIVS…IGAI).

Belongs to the ATPase A chain family. F-type ATPases have 2 components, CF(1) - the catalytic core - and CF(0) - the membrane proton channel. CF(1) has five subunits: alpha(3), beta(3), gamma(1), delta(1), epsilon(1). CF(0) has three main subunits: a(1), b(2) and c(9-12). The alpha and beta chains form an alternating ring which encloses part of the gamma chain. CF(1) is attached to CF(0) by a central stalk formed by the gamma and epsilon chains, while a peripheral stalk is formed by the delta and b chains.

The protein localises to the cell membrane. Its function is as follows. Key component of the proton channel; it plays a direct role in the translocation of protons across the membrane. This Limosilactobacillus fermentum (strain NBRC 3956 / LMG 18251) (Lactobacillus fermentum) protein is ATP synthase subunit a.